Here is a 509-residue protein sequence, read N- to C-terminus: Lanosterol 14-alpha demethylase (509 aa).

A helical membrane pass occupies residues 30–50 (GNLLSMLLIACAFTLSLVYLF). Position 455 (Cys-455) interacts with heme.

The protein belongs to the cytochrome P450 family. The cofactor is heme. Post-translationally, ubiquitinated by MARCHF6, leading to proteasomal degradation.

It is found in the endoplasmic reticulum membrane. Its subcellular location is the microsome membrane. The enzyme catalyses a 14alpha-methyl steroid + 3 reduced [NADPH--hemoprotein reductase] + 3 O2 = a Delta(14) steroid + formate + 3 oxidized [NADPH--hemoprotein reductase] + 4 H2O + 4 H(+). It carries out the reaction lanosterol + 3 reduced [NADPH--hemoprotein reductase] + 3 O2 = 4,4-dimethyl-5alpha-cholesta-8,14,24-trien-3beta-ol + formate + 3 oxidized [NADPH--hemoprotein reductase] + 4 H2O + 4 H(+). It catalyses the reaction 24,25-dihydrolanosterol + 3 reduced [NADPH--hemoprotein reductase] + 3 O2 = 4,4-dimethyl-8,14-cholestadien-3beta-ol + formate + 3 oxidized [NADPH--hemoprotein reductase] + 4 H2O + 4 H(+). The catalysed reaction is a 14alpha-methyl steroid + reduced [NADPH--hemoprotein reductase] + O2 = a 14alpha-hydroxymethyl steroid + oxidized [NADPH--hemoprotein reductase] + H2O + H(+). The enzyme catalyses a 14alpha-hydroxymethyl steroid + reduced [NADPH--hemoprotein reductase] + O2 = a 14alpha-formyl steroid + oxidized [NADPH--hemoprotein reductase] + 2 H2O + H(+). It carries out the reaction a 14alpha-formyl steroid + reduced [NADPH--hemoprotein reductase] + O2 = a Delta(14) steroid + formate + oxidized [NADPH--hemoprotein reductase] + H2O + 2 H(+). It catalyses the reaction lanosterol + reduced [NADPH--hemoprotein reductase] + O2 = 32-hydroxylanosterol + oxidized [NADPH--hemoprotein reductase] + H2O + H(+). The catalysed reaction is 32-hydroxylanosterol + reduced [NADPH--hemoprotein reductase] + O2 = 32-oxolanosterol + oxidized [NADPH--hemoprotein reductase] + 2 H2O + H(+). The enzyme catalyses 32-oxolanosterol + reduced [NADPH--hemoprotein reductase] + O2 = 4,4-dimethyl-5alpha-cholesta-8,14,24-trien-3beta-ol + formate + oxidized [NADPH--hemoprotein reductase] + H2O + 2 H(+). It carries out the reaction 24,25-dihydrolanosterol + reduced [NADPH--hemoprotein reductase] + O2 = 32-hydroxy-24,25-dihydrolanosterol + oxidized [NADPH--hemoprotein reductase] + H2O + H(+). It catalyses the reaction 32-hydroxy-24,25-dihydrolanosterol + reduced [NADPH--hemoprotein reductase] + O2 = 32-oxo-24,25-dihydrolanosterol + oxidized [NADPH--hemoprotein reductase] + 2 H2O + H(+). The catalysed reaction is 32-oxo-24,25-dihydrolanosterol + reduced [NADPH--hemoprotein reductase] + O2 = 4,4-dimethyl-8,14-cholestadien-3beta-ol + formate + oxidized [NADPH--hemoprotein reductase] + H2O + 2 H(+). It participates in steroid biosynthesis; zymosterol biosynthesis; zymosterol from lanosterol: step 1/6. Its activity is regulated as follows. Inhibited by azalanstat. Inhibited by azole antifungal agents ketoconazole, itraconazole and fluconazole. In terms of biological role, sterol 14alpha-demethylase that plays a critical role in the cholesterol biosynthesis pathway, being cholesterol the major sterol component in mammalian membranes as well as a precursor for bile acid and steroid hormone synthesis. Cytochrome P450 monooxygenase that catalyzes the three-step oxidative removal of the 14alpha-methyl group (C-32) of sterols such as lanosterol (lanosta-8,24-dien-3beta-ol) and 24,25-dihydrolanosterol (DHL) in the form of formate, and converts the sterols to 4,4-dimethyl-5alpha-cholesta-8,14,24-trien-3beta-ol and 4,4-dimethyl-8,14-cholestadien-3beta-ol, respectively, which are intermediates of cholesterol biosynthesis. Can also demethylate substrates not intrinsic to mammals, such as eburicol (24-methylene-24,25-dihydrolanosterol), but at a lower rate than DHL. The protein is Lanosterol 14-alpha demethylase of Macaca fascicularis (Crab-eating macaque).